The sequence spans 314 residues: Probable manganese-dependent inorganic pyrophosphatase (314 aa).

Residues histidine 10, aspartate 14, aspartate 16, aspartate 80, histidine 102, and aspartate 154 each contribute to the Mn(2+) site.

It belongs to the PPase class C family. Requires Mn(2+) as cofactor.

The protein resides in the cytoplasm. It catalyses the reaction diphosphate + H2O = 2 phosphate + H(+). This Lactococcus lactis subsp. lactis (strain IL1403) (Streptococcus lactis) protein is Probable manganese-dependent inorganic pyrophosphatase (ppaC).